The sequence spans 172 residues: Adenine phosphoribosyltransferase (172 aa).

The protein belongs to the purine/pyrimidine phosphoribosyltransferase family. Homodimer.

It localises to the cytoplasm. It catalyses the reaction AMP + diphosphate = 5-phospho-alpha-D-ribose 1-diphosphate + adenine. Its pathway is purine metabolism; AMP biosynthesis via salvage pathway; AMP from adenine: step 1/1. In terms of biological role, catalyzes a salvage reaction resulting in the formation of AMP, that is energically less costly than de novo synthesis. The chain is Adenine phosphoribosyltransferase from Synechococcus sp. (strain CC9311).